Consider the following 449-residue polypeptide: Mitochondrial distribution and morphology protein 10 (449 aa).

Disordered regions lie at residues G215 to D244 and D282 to S307. The segment covering P285–L301 has biased composition (low complexity).

This sequence belongs to the MDM10 family. Component of the ER-mitochondria encounter structure (ERMES) or MDM complex, composed of MMM1, MDM10, MDM12 and MDM34. Associates with the mitochondrial outer membrane sorting assembly machinery SAM(core) complex.

The protein localises to the mitochondrion outer membrane. Its function is as follows. Component of the ERMES/MDM complex, which serves as a molecular tether to connect the endoplasmic reticulum and mitochondria. Components of this complex are involved in the control of mitochondrial shape and protein biogenesis and may function in phospholipid exchange. MDM10 is involved in the late assembly steps of the general translocase of the mitochondrial outer membrane (TOM complex). Functions in the TOM40-specific route of the assembly of outer membrane beta-barrel proteins, including the association of TOM40 with the receptor TOM22 and small TOM proteins. Can associate with the SAM(core) complex as well as the MDM12-MMM1 complex, both involved in late steps of the major beta-barrel assembly pathway, that is responsible for biogenesis of all outer membrane beta-barrel proteins. May act as a switch that shuttles between both complexes and channels precursor proteins into the TOM40-specific pathway. Plays a role in mitochondrial morphology and in the inheritance of mitochondria. In Postia placenta (strain ATCC 44394 / Madison 698-R) (Brown rot fungus), this protein is Mitochondrial distribution and morphology protein 10.